The sequence spans 40 residues: Large ribosomal subunit protein bL36B (40 aa).

This sequence belongs to the bacterial ribosomal protein bL36 family.

The protein is Large ribosomal subunit protein bL36B of Arthrobacter sp. (strain FB24).